Here is a 204-residue protein sequence, read N- to C-terminus: ATP-dependent Clp protease proteolytic subunit (204 aa).

Ser-101 serves as the catalytic Nucleophile. Residue His-126 is part of the active site.

It belongs to the peptidase S14 family. Fourteen ClpP subunits assemble into 2 heptameric rings which stack back to back to give a disk-like structure with a central cavity, resembling the structure of eukaryotic proteasomes.

It is found in the cytoplasm. It catalyses the reaction Hydrolysis of proteins to small peptides in the presence of ATP and magnesium. alpha-casein is the usual test substrate. In the absence of ATP, only oligopeptides shorter than five residues are hydrolyzed (such as succinyl-Leu-Tyr-|-NHMec, and Leu-Tyr-Leu-|-Tyr-Trp, in which cleavage of the -Tyr-|-Leu- and -Tyr-|-Trp bonds also occurs).. Functionally, cleaves peptides in various proteins in a process that requires ATP hydrolysis. Has a chymotrypsin-like activity. Plays a major role in the degradation of misfolded proteins. The protein is ATP-dependent Clp protease proteolytic subunit of Deinococcus radiodurans (strain ATCC 13939 / DSM 20539 / JCM 16871 / CCUG 27074 / LMG 4051 / NBRC 15346 / NCIMB 9279 / VKM B-1422 / R1).